The chain runs to 589 residues: Serine/threonine-protein phosphatase 2A 65 kDa regulatory subunit A alpha isoform (589 aa).

Ala-2 carries the N-acetylalanine modification. HEAT repeat units follow at residues 8–46 (DSLY…GVER), 47–84 (TRSE…GGPE), 85–123 (YVHC…SPSD), 124–161 (LEAH…VSSA), 162–200 (VKAE…ELDN), 201–239 (VKSE…PQED), 240–278 (LEAL…GPEI), 279–321 (TKTD…RENV), 322–360 (IMSQ…GKDN), 361–399 (TIEH…GIRQ), 400–438 (LSQS…GVEF), 439–477 (FDEK…GKEW), 478–516 (AHAT…GQDI), 517–555 (TTKH…DNST), and 556–589 (LQSE…LSLA). The tract at residues 8-399 (DSLYPIAVLI…CVNEVIGIRQ (392 aa)) is PP2A subunit B binding. The polyoma small and medium T antigens Binding stretch occupies residues 47–321 (TRSELLPFLT…NLSADCRENV (275 aa)). Residues 85–239 (YVHCLLPPLE…NIAQLLPQED (155 aa)) form an SV40 small T antigen binding region. N6-acetyllysine is present on Lys-280. The PP2A subunit C binding stretch occupies residues 400–589 (LSQSLLPAIV…QEALTVLSLA (190 aa)).

The protein belongs to the phosphatase 2A regulatory subunit A family. In terms of assembly, PP2A consists of a common heterodimeric core enzyme, composed of PPP2CA a 36 kDa catalytic subunit (subunit C) and PPP2R1A a 65 kDa constant regulatory subunit (PR65 or subunit A), that associates with a variety of regulatory subunits. Proteins that associate with the core dimer include three families of regulatory subunits B (the R2/B/PR55/B55, R3/B''/PR72/PR130/PR59 and R5/B'/B56 families), the 48 kDa variable regulatory subunit, viral proteins, and cell signaling molecules. Found in a complex with at least ARL2, PPP2CB, PPP2R1A, PPP2R2A, PPP2R5E and TBCD. Interacts with the PP2A C catalytic subunit PPP2CA. Interacts with the PP2A B subunit PPP2R2A. Interacts with the PP2A B subunit PPP2R5D. Interacts with FOXO1; the interaction dephosphorylates FOXO1 on AKT-mediated phosphorylation sites. Interacts with IPO9. Interacts with TP53 and SGO1. Interacts with PLA2G16; this interaction might decrease PP2A activity. Interacts with CTTNBP2NL. Interacts with GNA12; the interaction promotes protein phosphatase 2A activation causing dephosphorylation of MAPT. Interacts with CIP2A; this interaction stabilizes CIP2A. Interacts with PABIR1/FAM122A. Interacts with ADCY8; antagonizes interaction between ADCY8 and calmodulin. Interacts with CRTC3 (when phosphorylated at 'Ser-391'). Interacts with SPRY2. Part of the core of STRIPAK complexes composed of PP2A catalytic and scaffolding subunits, the striatins (PP2A regulatory subunits), the striatin-associated proteins MOB4, STRIP1 and STRIP2, PDCD10 and members of the STE20 kinases, such as STK24 and STK26. Component of the Integrator-PP2A (INTAC) complex, composed of the Integrator core complex and protein phosphatase 2A subunits PPP2CA and PPP2R1A. (Microbial infection) Interacts with JC virus small t antigen; this interaction inhibits PPP2R1A activity.

It localises to the cytoplasm. The protein localises to the nucleus. Its subcellular location is the chromosome. The protein resides in the centromere. It is found in the lateral cell membrane. It localises to the cell projection. The protein localises to the dendrite. Its function is as follows. The PR65 subunit of protein phosphatase 2A serves as a scaffolding molecule to coordinate the assembly of the catalytic subunit and a variable regulatory B subunit. Upon interaction with GNA12 promotes dephosphorylation of microtubule associated protein TAU/MAPT. Required for proper chromosome segregation and for centromeric localization of SGO1 in mitosis. Together with RACK1 adapter, mediates dephosphorylation of AKT1 at 'Ser-473', preventing AKT1 activation and AKT-mTOR signaling pathway. Dephosphorylation of AKT1 is essential for regulatory T-cells (Treg) homeostasis and stability. Part of the striatin-interacting phosphatase and kinase (STRIPAK) complexes. STRIPAK complexes have critical roles in protein (de)phosphorylation and are regulators of multiple signaling pathways including Hippo, MAPK, nuclear receptor and cytoskeleton remodeling. Different types of STRIPAK complexes are involved in a variety of biological processes such as cell growth, differentiation, apoptosis, metabolism and immune regulation. Key mediator of a quality checkpoint during transcription elongation as part of the Integrator-PP2A (INTAC) complex. The INTAC complex drives premature transcription termination of transcripts that are unfavorably configured for transcriptional elongation: within the INTAC complex, acts as a scaffolding subunit for PPP2CA, which catalyzes dephosphorylation of the C-terminal domain (CTD) of Pol II subunit POLR2A/RPB1 and SUPT5H/SPT5, thereby preventing transcriptional elongation. Regulates the recruitment of the SKA complex to kinetochores. In Homo sapiens (Human), this protein is Serine/threonine-protein phosphatase 2A 65 kDa regulatory subunit A alpha isoform.